A 644-amino-acid chain; its full sequence is CTP synthase (644 aa).

The region spanning 300–551 (SIAIVGKYTK…LGLILASVDR (252 aa)) is the Glutamine amidotransferase type-1 domain. Residues Cys399, His527, and Glu529 each act as for GATase activity in the active site.

Belongs to the CTP synthase family.

It catalyses the reaction UTP + L-glutamine + ATP + H2O = CTP + L-glutamate + ADP + phosphate + 2 H(+). Its pathway is pyrimidine metabolism; CTP biosynthesis via de novo pathway; CTP from UDP: step 2/2. Functionally, catalyzes the ATP-dependent amination of UTP to CTP with either L-glutamine or ammonia as the source of nitrogen. Constitutes the rate-limiting enzyme in the synthesis of cytosine nucleotides. In Drosophila pseudoobscura pseudoobscura (Fruit fly), this protein is CTP synthase.